Reading from the N-terminus, the 554-residue chain is NADH-quinone oxidoreductase subunit N 3 (554 aa).

Transmembrane regions (helical) follow at residues leucine 35–valine 55, leucine 65–glycine 85, proline 105–alanine 125, glycine 161–phenylalanine 181, leucine 187–valine 207, tyrosine 222–glycine 242, alanine 275–valine 295, valine 322–aspartate 342, proline 345–glutamine 365, leucine 371–serine 391, valine 398–leucine 418, valine 442–phenylalanine 462, glycine 476–isoleucine 496, and isoleucine 525–leucine 545.

Belongs to the complex I subunit 2 family. As to quaternary structure, NDH-1 is composed of 14 different subunits. Subunits NuoA, H, J, K, L, M, N constitute the membrane sector of the complex.

The protein localises to the cell membrane. It carries out the reaction a quinone + NADH + 5 H(+)(in) = a quinol + NAD(+) + 4 H(+)(out). Its function is as follows. NDH-1 shuttles electrons from NADH, via FMN and iron-sulfur (Fe-S) centers, to quinones in the respiratory chain. The immediate electron acceptor for the enzyme in this species is believed to be a menaquinone. Couples the redox reaction to proton translocation (for every two electrons transferred, four hydrogen ions are translocated across the cytoplasmic membrane), and thus conserves the redox energy in a proton gradient. The polypeptide is NADH-quinone oxidoreductase subunit N 3 (Streptomyces griseus subsp. griseus (strain JCM 4626 / CBS 651.72 / NBRC 13350 / KCC S-0626 / ISP 5235)).